The following is a 104-amino-acid chain: Large ribosomal subunit protein uL24 (104 aa).

This sequence belongs to the universal ribosomal protein uL24 family. Part of the 50S ribosomal subunit.

Functionally, one of two assembly initiator proteins, it binds directly to the 5'-end of the 23S rRNA, where it nucleates assembly of the 50S subunit. Its function is as follows. One of the proteins that surrounds the polypeptide exit tunnel on the outside of the subunit. The protein is Large ribosomal subunit protein uL24 of Afipia carboxidovorans (strain ATCC 49405 / DSM 1227 / KCTC 32145 / OM5) (Oligotropha carboxidovorans).